Reading from the N-terminus, the 54-residue chain is UPF0391 membrane protein Mfla_0947/Mfla_1091 (54 aa).

Transmembrane regions (helical) follow at residues 6 to 26 (VIFFVIALIAAFFGFSGIAAG) and 30 to 50 (IAKILFFVFLIITIVSLVAGI).

Belongs to the UPF0391 family.

The protein resides in the cell membrane. The chain is UPF0391 membrane protein Mfla_0947/Mfla_1091 from Methylobacillus flagellatus (strain ATCC 51484 / DSM 6875 / VKM B-1610 / KT).